The sequence spans 334 residues: Eukaryotic translation initiation factor 3 subunit H (334 aa).

One can recognise an MPN domain in the interval 20–152 (VQCDGLAAMK…LKAYRLTPQA (133 aa)).

The protein belongs to the eIF-3 subunit H family. As to quaternary structure, component of the eukaryotic translation initiation factor 3 (eIF-3) complex.

The protein resides in the cytoplasm. Component of the eukaryotic translation initiation factor 3 (eIF-3) complex, which is involved in protein synthesis of a specialized repertoire of mRNAs and, together with other initiation factors, stimulates binding of mRNA and methionyl-tRNAi to the 40S ribosome. The eIF-3 complex specifically targets and initiates translation of a subset of mRNAs involved in cell proliferation. The sequence is that of Eukaryotic translation initiation factor 3 subunit H from Anopheles gambiae (African malaria mosquito).